A 448-amino-acid chain; its full sequence is UDP-N-acetylmuramoylalanine--D-glutamate ligase (448 aa).

116 to 122 is an ATP binding site; sequence GSNAKST.

Belongs to the MurCDEF family.

It is found in the cytoplasm. The catalysed reaction is UDP-N-acetyl-alpha-D-muramoyl-L-alanine + D-glutamate + ATP = UDP-N-acetyl-alpha-D-muramoyl-L-alanyl-D-glutamate + ADP + phosphate + H(+). The protein operates within cell wall biogenesis; peptidoglycan biosynthesis. In terms of biological role, cell wall formation. Catalyzes the addition of glutamate to the nucleotide precursor UDP-N-acetylmuramoyl-L-alanine (UMA). The chain is UDP-N-acetylmuramoylalanine--D-glutamate ligase from Pseudomonas fluorescens (strain Pf0-1).